Consider the following 196-residue polypeptide: Translation machinery-associated protein 22 (196 aa).

One can recognise an SUI1 domain in the interval 111 to 182 (IIIKRIERNK…EAKEYIEKLL (72 aa)).

This sequence belongs to the DENR family. As to quaternary structure, interacts with the 40S ribosomal subunit.

It is found in the cytoplasm. The chain is Translation machinery-associated protein 22 (TMA22) from Lodderomyces elongisporus (strain ATCC 11503 / CBS 2605 / JCM 1781 / NBRC 1676 / NRRL YB-4239) (Yeast).